The primary structure comprises 505 residues: ATP synthase subunit beta, mitochondrial (505 aa).

Residues 1 to 31 (MFALRAASKADKNLLPFLGQLSRSHAAKAAK) constitute a mitochondrion transit peptide. 183-190 (GGAGVGKT) is a binding site for ATP.

This sequence belongs to the ATPase alpha/beta chains family. F-type ATPases have 2 components, CF(1) - the catalytic core - and CF(0) - the membrane proton channel. CF(1) has five subunits: alpha(3), beta(3), gamma(1), delta(1), epsilon(1). CF(0) has three main subunits: a, b and c.

It is found in the mitochondrion. The protein localises to the mitochondrion inner membrane. It carries out the reaction ATP + H2O + 4 H(+)(in) = ADP + phosphate + 5 H(+)(out). Its function is as follows. Mitochondrial membrane ATP synthase (F(1)F(0) ATP synthase or Complex V) produces ATP from ADP in the presence of a proton gradient across the membrane which is generated by electron transport complexes of the respiratory chain. F-type ATPases consist of two structural domains, F(1) - containing the extramembraneous catalytic core, and F(0) - containing the membrane proton channel, linked together by a central stalk and a peripheral stalk. During catalysis, ATP synthesis in the catalytic domain of F(1) is coupled via a rotary mechanism of the central stalk subunits to proton translocation. Subunits alpha and beta form the catalytic core in F(1). Rotation of the central stalk against the surrounding alpha(3)beta(3) subunits leads to hydrolysis of ATP in three separate catalytic sites on the beta subunits. The protein is ATP synthase subunit beta, mitochondrial of Drosophila melanogaster (Fruit fly).